A 584-amino-acid polypeptide reads, in one-letter code: Pentalenolactone D synthase (584 aa).

FAD is bound by residues 55-56, 77-78, 85-86, 97-98, Tyr-103, Val-147, and Met-486; these read IG, DG, TW, and DV.

Belongs to the FAD-binding monooxygenase family. FAD is required as a cofactor.

The enzyme catalyses 1-deoxy-11-oxopentalenate + NADPH + O2 + H(+) = pentalenolactone D + NADP(+) + H2O. It participates in antibiotic biosynthesis; pentalenolactone biosynthesis. Catalyzes the flavin-dependent Baeyer-Villiger oxidation of 1-deoxy-11-oxopentalenic acid to pentalenolactone D in the biosynthesis of pentalenolactone antibiotic. The protein is Pentalenolactone D synthase (penE) of Streptomyces exfoliatus (Streptomyces hydrogenans).